The primary structure comprises 311 residues: Probable mitochondrial phosphate carrier protein (311 aa).

Residues 1 to 23 (MSTPLIPPAPPKKTLQLYTPQYY) lie on the Mitochondrial intermembrane side of the membrane. Solcar repeat units lie at residues 21–105 (QYYG…FKHK), 118–203 (YRTS…IVEA), and 219–303 (EKIG…FKIM). Residues 24 to 44 (GLCTLGGLLACGTTHSAITPL) traverse the membrane as a helical segment. The Mitochondrial matrix portion of the chain corresponds to 45–67 (DLIKCRKQVNPNIYPGNIAGFKT). Residues 68–88 (ILSKEGLRGLYTGGMPTLIGY) traverse the membrane as a helical segment. Topologically, residues 89-120 (SLQGCGKYGFYELFKHKYSTLVGAQKAHEYRT) are mitochondrial intermembrane. The chain crosses the membrane as a helical span at residues 121–141 (SIYLAASASAELLADIMLCPM). At 142–171 (EAIKVRVQTSNPRFANTTREAWSKIVTNEG) the chain is on the mitochondrial matrix side. Residues 172–192 (FGTLYRGLAPLWFRQIPYTMM) form a helical membrane-spanning segment. At 193-220 (KFASFERIVEALYTYIGKPKNMYSKAEK) the chain is on the mitochondrial intermembrane side. A helical transmembrane segment spans residues 221 to 241 (IGISFAGGYMAGVLCAIISHP). The Mitochondrial matrix segment spans residues 242 to 269 (ADVMVSKLNSNKKAGEGAGAAAARIYKE). Residues 270–290 (IGFSGLWNGLGVRIVMIGTLT) form a helical membrane-spanning segment. The Mitochondrial intermembrane segment spans residues 291 to 311 (GAQWLIYDSFKIMCGFPATGA).

The protein belongs to the mitochondrial carrier (TC 2.A.29) family.

The protein localises to the mitochondrion inner membrane. In terms of biological role, transport of phosphate groups from the cytosol to the mitochondrial matrix. In Schizosaccharomyces pombe (strain 972 / ATCC 24843) (Fission yeast), this protein is Probable mitochondrial phosphate carrier protein.